A 213-amino-acid chain; its full sequence is Protein-L-isoaspartate O-methyltransferase (213 aa).

S58 is an active-site residue.

It belongs to the methyltransferase superfamily. L-isoaspartyl/D-aspartyl protein methyltransferase family.

The protein localises to the cytoplasm. The enzyme catalyses [protein]-L-isoaspartate + S-adenosyl-L-methionine = [protein]-L-isoaspartate alpha-methyl ester + S-adenosyl-L-homocysteine. Functionally, catalyzes the methyl esterification of L-isoaspartyl residues in peptides and proteins that result from spontaneous decomposition of normal L-aspartyl and L-asparaginyl residues. It plays a role in the repair and/or degradation of damaged proteins. The sequence is that of Protein-L-isoaspartate O-methyltransferase from Chlorobaculum tepidum (strain ATCC 49652 / DSM 12025 / NBRC 103806 / TLS) (Chlorobium tepidum).